The following is a 262-amino-acid chain: Global transcriptional regulator CodY (262 aa).

The interval 1 to 159 is GAF domain; the sequence is MAHLLEKTRK…SSTVVGIQLL (159 aa). Residues 207 to 226 constitute a DNA-binding region (H-T-H motif); it reads ASVIADRIGITRSVIVNALR.

Belongs to the CodY family.

It localises to the cytoplasm. DNA-binding global transcriptional regulator which is involved in the adaptive response to starvation and acts by directly or indirectly controlling the expression of numerous genes in response to nutrient availability. During rapid exponential growth, CodY is highly active and represses genes whose products allow adaptation to nutrient depletion. The chain is Global transcriptional regulator CodY from Streptococcus gordonii (strain Challis / ATCC 35105 / BCRC 15272 / CH1 / DL1 / V288).